Consider the following 289-residue polypeptide: Pyridoxal kinase PdxY (289 aa).

Residues serine 9 and 44 to 45 (TQ) each bind substrate. Residues aspartate 112, alanine 144, glutamate 149, lysine 183, and 210 to 213 (RPLV) contribute to the ATP site. Aspartate 225 is a substrate binding site.

Belongs to the pyridoxine kinase family. PdxY subfamily. Homodimer. The cofactor is Mg(2+).

The catalysed reaction is pyridoxal + ATP = pyridoxal 5'-phosphate + ADP + H(+). It functions in the pathway cofactor metabolism; pyridoxal 5'-phosphate salvage; pyridoxal 5'-phosphate from pyridoxal: step 1/1. Functionally, pyridoxal kinase involved in the salvage pathway of pyridoxal 5'-phosphate (PLP). Catalyzes the phosphorylation of pyridoxal to PLP. The polypeptide is Pyridoxal kinase PdxY (Proteus mirabilis).